Here is a 616-residue protein sequence, read N- to C-terminus: Replication protein A 70 kDa DNA-binding subunit (616 aa).

Met-1 is modified (N-acetylmethionine). Glycyl lysine isopeptide (Lys-Gly) (interchain with G-Cter in ubiquitin) cross-links involve residues Lys-22 and Lys-88. Positions 121–154 (GLGQPQVAPPAPAASPAASSRPQPQNGSSGMGST) are disordered. A compositionally biased stretch (low complexity) spans 134–145 (ASPAASSRPQPQ). An N6-acetyllysine; alternate mark is found at Lys-163 and Lys-167. Residues Lys-163 and Lys-167 each participate in a glycyl lysine isopeptide (Lys-Gly) (interchain with G-Cter in ubiquitin); alternate cross-link. Thr-180 is modified (phosphothreonine). A Glycyl lysine isopeptide (Lys-Gly) (interchain with G-Cter in ubiquitin) cross-link involves residue Lys-183. Thr-191 carries the phosphothreonine modification. The OB DNA-binding region spans 197–281 (WTICARVTNK…VKNDYEMTFN (85 aa)). Residues Lys-220 and Lys-244 each participate in a glycyl lysine isopeptide (Lys-Gly) (interchain with G-Cter in ubiquitin) cross-link. At Lys-259 the chain carries N6-acetyllysine; alternate. Residue Lys-259 forms a Glycyl lysine isopeptide (Lys-Gly) (interchain with G-Cter in ubiquitin); alternate linkage. Glycyl lysine isopeptide (Lys-Gly) (interchain with G-Cter in ubiquitin) cross-links involve residues Lys-267 and Lys-331. Position 384 is a phosphoserine (Ser-384). Residues Lys-410 and Lys-431 each participate in a glycyl lysine isopeptide (Lys-Gly) (interchain with G-Cter in ubiquitin) cross-link. Residue Lys-449 forms a Glycyl lysine isopeptide (Lys-Gly) (interchain with G-Cter in SUMO) linkage. Lys-458 participates in a covalent cross-link: Glycyl lysine isopeptide (Lys-Gly) (interchain with G-Cter in ubiquitin). The segment at 481–503 (CPTQDCNKKVIDQQNGLYRCEKC) adopts a C4-type zinc-finger fold. Lys-553 participates in a covalent cross-link: Glycyl lysine isopeptide (Lys-Gly) (interchain with G-Cter in ubiquitin). Residue Lys-577 forms a Glycyl lysine isopeptide (Lys-Gly) (interchain with G-Cter in SUMO) linkage.

The protein belongs to the replication factor A protein 1 family. Component of the canonical replication protein A complex (RPA), a heterotrimer composed of RPA1, RPA2 and RPA3. Also a component of the aRPA, the alternative replication protein A complex, a trimeric complex similar to the replication protein A complex/RPA but where RPA1 and RPA3 are associated with RPA4 instead of RPA2. The DNA-binding activity may reside exclusively on the RPA1 subunit. Interacts with PRPF19; the PRP19-CDC5L complex is recruited to the sites of DNA repair where it ubiquitinates the replication protein A complex (RPA). Interacts with RIPK1. Interacts with the polymerase alpha subunit POLA1/p180; this interaction stabilizes the replicative complex and reduces the misincorporation rate of DNA polymerase alpha by acting as a fidelity clamp. Interacts with RAD51 and SENP6 to regulate DNA repair. Interacts with HELB; this interaction promotes HELB recruitment to chromatin following DNA damage. Interacts with PRIMPOL; leading to recruit PRIMPOL on chromatin and stimulate its DNA primase activity. Interacts with XPA; the interaction is direct and associates XPA with the RPA complex. Interacts with ETAA1; the interaction is direct and promotes ETAA1 recruitment at stalled replication forks. Interacts with RPA1; this interaction associates HROB with the RPA complex. Interacts (when poly-ADP-ribosylated) with HTATSF1. Interacts with BRIP1/FANCJ via this RPA1 subunit; following DNA damage they colocalize in foci in the nucleus. DNA damage-induced 'Lys-63'-linked polyubiquitination by PRPF19 mediates ATRIP recruitment to the RPA complex at sites of DNA damage and activation of ATR. Ubiquitinated by RFWD3 at stalled replication forks in response to DNA damage: ubiquitination by RFWD3 does not lead to degradation by the proteasome and promotes removal of the RPA complex from stalled replication forks, promoting homologous recombination. Post-translationally, sumoylated on lysine residues Lys-449 and Lys-577, with Lys-449 being the major site. Sumoylation promotes recruitment of RAD51 to the DNA damage foci to initiate DNA repair through homologous recombination. Desumoylated by SENP6. In terms of processing, poly-ADP-ribosylated by PARP1; promoting recruitment of HTATSF1.

Its subcellular location is the nucleus. It localises to the PML body. As part of the heterotrimeric replication protein A complex (RPA/RP-A), binds and stabilizes single-stranded DNA intermediates that form during DNA replication or upon DNA stress. It prevents their reannealing and in parallel, recruits and activates different proteins and complexes involved in DNA metabolism. Thereby, it plays an essential role both in DNA replication and the cellular response to DNA damage. In the cellular response to DNA damage, the RPA complex controls DNA repair and DNA damage checkpoint activation. Through recruitment of ATRIP activates the ATR kinase a master regulator of the DNA damage response. It is required for the recruitment of the DNA double-strand break repair factors RAD51 and RAD52 to chromatin in response to DNA damage. Also recruits to sites of DNA damage proteins like XPA and XPG that are involved in nucleotide excision repair and is required for this mechanism of DNA repair. Also plays a role in base excision repair (BER) probably through interaction with UNG. Also recruits SMARCAL1/HARP, which is involved in replication fork restart, to sites of DNA damage. Plays a role in telomere maintenance. As part of the alternative replication protein A complex, aRPA, binds single-stranded DNA and probably plays a role in DNA repair. Compared to the RPA2-containing, canonical RPA complex, may not support chromosomal DNA replication and cell cycle progression through S-phase. The aRPA may not promote efficient priming by DNA polymerase alpha but could support DNA synthesis by polymerase delta in presence of PCNA and replication factor C (RFC), the dual incision/excision reaction of nucleotide excision repair and RAD51-dependent strand exchange. RPA stimulates 5'-3' helicase activity of the BRIP1/FANCJ. This Homo sapiens (Human) protein is Replication protein A 70 kDa DNA-binding subunit (RPA1).